Reading from the N-terminus, the 413-residue chain is Putative F-box protein At3g17560 (413 aa).

One can recognise an F-box domain in the interval 9 to 55 (TKLLFDLPQDVIEEIFSKVPVTCLRRIRSTCKRLYALLKDRGFIRKH).

The polypeptide is Putative F-box protein At3g17560 (Arabidopsis thaliana (Mouse-ear cress)).